Here is a 104-residue protein sequence, read N- to C-terminus: Small ribosomal subunit protein bS6c (104 aa).

It belongs to the bacterial ribosomal protein bS6 family.

It is found in the plastid. Its subcellular location is the cyanelle. In terms of biological role, binds together with bS18 to 16S ribosomal RNA. The chain is Small ribosomal subunit protein bS6c (rps6) from Cyanophora paradoxa.